The chain runs to 250 residues: Probable S-methyl-5'-thioinosine phosphorylase (250 aa).

Phosphate is bound by residues threonine 14 and 56–57 (RH). Methionine 189 serves as a coordination point for substrate. Threonine 190 is a binding site for phosphate. 213-215 (NWA) contributes to the substrate binding site.

This sequence belongs to the PNP/MTAP phosphorylase family. MTAP subfamily. As to quaternary structure, homotrimer.

It catalyses the reaction S-methyl-5'-thioinosine + phosphate = 5-(methylsulfanyl)-alpha-D-ribose 1-phosphate + hypoxanthine. It functions in the pathway purine metabolism; purine nucleoside salvage. Its function is as follows. Catalyzes the reversible phosphorylation of S-methyl-5'-thioinosine (MTI) to hypoxanthine and 5-methylthioribose-1-phosphate. Involved in the breakdown of S-methyl-5'-thioadenosine (MTA), a major by-product of polyamine biosynthesis. Catabolism of (MTA) occurs via deamination to MTI and phosphorolysis to hypoxanthine. The sequence is that of Probable S-methyl-5'-thioinosine phosphorylase from Xanthomonas campestris pv. campestris (strain ATCC 33913 / DSM 3586 / NCPPB 528 / LMG 568 / P 25).